We begin with the raw amino-acid sequence, 243 residues long: 2-C-methyl-D-erythritol 4-phosphate cytidylyltransferase (243 aa).

Belongs to the IspD/TarI cytidylyltransferase family. IspD subfamily.

It carries out the reaction 2-C-methyl-D-erythritol 4-phosphate + CTP + H(+) = 4-CDP-2-C-methyl-D-erythritol + diphosphate. The protein operates within isoprenoid biosynthesis; isopentenyl diphosphate biosynthesis via DXP pathway; isopentenyl diphosphate from 1-deoxy-D-xylulose 5-phosphate: step 2/6. Its function is as follows. Catalyzes the formation of 4-diphosphocytidyl-2-C-methyl-D-erythritol from CTP and 2-C-methyl-D-erythritol 4-phosphate (MEP). The sequence is that of 2-C-methyl-D-erythritol 4-phosphate cytidylyltransferase from Aeromonas hydrophila subsp. hydrophila (strain ATCC 7966 / DSM 30187 / BCRC 13018 / CCUG 14551 / JCM 1027 / KCTC 2358 / NCIMB 9240 / NCTC 8049).